The chain runs to 88 residues: Cell division topological specificity factor (88 aa).

This sequence belongs to the MinE family.

Prevents the cell division inhibition by proteins MinC and MinD at internal division sites while permitting inhibition at polar sites. This ensures cell division at the proper site by restricting the formation of a division septum at the midpoint of the long axis of the cell. In Escherichia fergusonii (strain ATCC 35469 / DSM 13698 / CCUG 18766 / IAM 14443 / JCM 21226 / LMG 7866 / NBRC 102419 / NCTC 12128 / CDC 0568-73), this protein is Cell division topological specificity factor.